We begin with the raw amino-acid sequence, 1396 residues long: DNA-directed RNA polymerase subunit beta' (1396 aa).

C72, C74, C87, and C90 together coordinate Zn(2+). Mg(2+)-binding residues include D463, D465, and D467. Residues C814, C889, C896, and C899 each coordinate Zn(2+).

It belongs to the RNA polymerase beta' chain family. The RNAP catalytic core consists of 2 alpha, 1 beta, 1 beta' and 1 omega subunit. When a sigma factor is associated with the core the holoenzyme is formed, which can initiate transcription. It depends on Mg(2+) as a cofactor. The cofactor is Zn(2+).

The catalysed reaction is RNA(n) + a ribonucleoside 5'-triphosphate = RNA(n+1) + diphosphate. DNA-dependent RNA polymerase catalyzes the transcription of DNA into RNA using the four ribonucleoside triphosphates as substrates. The protein is DNA-directed RNA polymerase subunit beta' of Chlamydia muridarum (strain MoPn / Nigg).